A 476-amino-acid chain; its full sequence is Glutamate--tRNA ligase (476 aa).

A 'HIGH' region motif is present at residues Pro-9–Thr-19. The short motif at Lys-248–Arg-252 is the 'KMSKS' region element. Lys-251 is a binding site for ATP.

This sequence belongs to the class-I aminoacyl-tRNA synthetase family. Glutamate--tRNA ligase type 1 subfamily. As to quaternary structure, monomer.

The protein resides in the cytoplasm. The enzyme catalyses tRNA(Glu) + L-glutamate + ATP = L-glutamyl-tRNA(Glu) + AMP + diphosphate. Functionally, catalyzes the attachment of glutamate to tRNA(Glu) in a two-step reaction: glutamate is first activated by ATP to form Glu-AMP and then transferred to the acceptor end of tRNA(Glu). This is Glutamate--tRNA ligase from Synechococcus sp. (strain CC9311).